A 697-amino-acid polypeptide reads, in one-letter code: Elongation factor G (697 aa).

The tr-type G domain maps to 8–283; sequence ERMRNIGIAA…AVVDYLPSPL (276 aa). GTP is bound by residues 17 to 24, 81 to 85, and 135 to 138; these read AHIDAGKT, DTPGH, and NKMD.

It belongs to the TRAFAC class translation factor GTPase superfamily. Classic translation factor GTPase family. EF-G/EF-2 subfamily.

It localises to the cytoplasm. In terms of biological role, catalyzes the GTP-dependent ribosomal translocation step during translation elongation. During this step, the ribosome changes from the pre-translocational (PRE) to the post-translocational (POST) state as the newly formed A-site-bound peptidyl-tRNA and P-site-bound deacylated tRNA move to the P and E sites, respectively. Catalyzes the coordinated movement of the two tRNA molecules, the mRNA and conformational changes in the ribosome. In Solibacter usitatus (strain Ellin6076), this protein is Elongation factor G.